The primary structure comprises 165 residues: PTS system glucose-specific EIIA component (165 aa).

Residues Asp34 to Asn138 form the PTS EIIA type-1 domain. Residues His71 and His86 each coordinate Zn(2+). Catalysis depends on His86, which acts as the Tele-phosphohistidine intermediate; for EIIA activity. His86 carries the phosphohistidine; by HPr modification.

In terms of assembly, heterodimer with glycerol kinase (glpk). Zn(2+) serves as cofactor.

Its subcellular location is the cytoplasm. In terms of biological role, the phosphoenolpyruvate-dependent sugar phosphotransferase system (sugar PTS), a major carbohydrate active transport system, catalyzes the phosphorylation of incoming sugar substrates concomitantly with their translocation across the cell membrane. The enzyme II complex composed of PtsG and Crr is involved in glucose transport. The polypeptide is PTS system glucose-specific EIIA component (crr) (Oceanobacillus iheyensis (strain DSM 14371 / CIP 107618 / JCM 11309 / KCTC 3954 / HTE831)).